Here is a 252-residue protein sequence, read N- to C-terminus: Auxin-induced in root cultures protein 12 (252 aa).

Positions Met-1–Ser-25 are cleaved as a signal peptide. Residues Leu-49–Gly-165 enclose the DOMON domain. Residues Asn-58 and Asn-61 are each glycosylated (N-linked (GlcNAc...) asparagine). Met-91 lines the heme pocket. 2 N-linked (GlcNAc...) asparagine glycosylation sites follow: Asn-114 and Asn-167. His-176 serves as a coordination point for heme. Residues Glu-193–Pro-224 form a disordered region. Positions Ala-195 to Thr-219 are enriched in low complexity. A lipid anchor (GPI-anchor amidated asparagine) is attached at Asn-226. The propeptide at Ala-227 to Phe-252 is removed in mature form.

Heme is required as a cofactor.

The protein resides in the cell membrane. In terms of biological role, one-heme-containing cytochrome. The protein is Auxin-induced in root cultures protein 12 (AIR12) of Arabidopsis thaliana (Mouse-ear cress).